Here is a 111-residue protein sequence, read N- to C-terminus: UPF0122 protein LACR_1522 (111 aa).

Belongs to the UPF0122 family.

Might take part in the signal recognition particle (SRP) pathway. This is inferred from the conservation of its genetic proximity to ftsY/ffh. May be a regulatory protein. This is UPF0122 protein LACR_1522 from Lactococcus lactis subsp. cremoris (strain SK11).